A 50-amino-acid chain; its full sequence is Large ribosomal subunit protein eL39 (50 aa).

Belongs to the eukaryotic ribosomal protein eL39 family.

This is Large ribosomal subunit protein eL39 from Methanosphaerula palustris (strain ATCC BAA-1556 / DSM 19958 / E1-9c).